A 344-amino-acid polypeptide reads, in one-letter code: Probable dual-specificity RNA methyltransferase RlmN (344 aa).

Residue glutamate 89 is the Proton acceptor of the active site. Positions 95 to 329 (TDQRLTVCVS…VSLRASRGLD (235 aa)) constitute a Radical SAM core domain. A disulfide bond links cysteine 102 and cysteine 334. 3 residues coordinate [4Fe-4S] cluster: cysteine 109, cysteine 113, and cysteine 116. Residues 156–157 (GE), serine 186, 215–217 (SLH), and asparagine 291 contribute to the S-adenosyl-L-methionine site. Catalysis depends on cysteine 334, which acts as the S-methylcysteine intermediate.

This sequence belongs to the radical SAM superfamily. RlmN family. [4Fe-4S] cluster serves as cofactor.

Its subcellular location is the cytoplasm. The catalysed reaction is adenosine(2503) in 23S rRNA + 2 reduced [2Fe-2S]-[ferredoxin] + 2 S-adenosyl-L-methionine = 2-methyladenosine(2503) in 23S rRNA + 5'-deoxyadenosine + L-methionine + 2 oxidized [2Fe-2S]-[ferredoxin] + S-adenosyl-L-homocysteine. It carries out the reaction adenosine(37) in tRNA + 2 reduced [2Fe-2S]-[ferredoxin] + 2 S-adenosyl-L-methionine = 2-methyladenosine(37) in tRNA + 5'-deoxyadenosine + L-methionine + 2 oxidized [2Fe-2S]-[ferredoxin] + S-adenosyl-L-homocysteine. Specifically methylates position 2 of adenine 2503 in 23S rRNA and position 2 of adenine 37 in tRNAs. This Parasynechococcus marenigrum (strain WH8102) protein is Probable dual-specificity RNA methyltransferase RlmN.